The sequence spans 522 residues: Gypsy retrotransposon integrase-like protein 1 (522 aa).

In terms of domain architecture, Integrase catalytic spans 135-292 (KVENPWSLVT…TPYFQMFSRN (158 aa)).

The chain is Gypsy retrotransposon integrase-like protein 1 (GIN1) from Macaca fascicularis (Crab-eating macaque).